Consider the following 216-residue polypeptide: Probable GTP-binding protein EngB (216 aa).

The region spanning 43-216 is the EngB-type G domain; the sequence is DRIEVCFAGR…TLRSIIAHLD (174 aa). GTP is bound by residues 51–58, 78–82, 96–99, 163–166, and 197–199; these read GRSNVGKS, GRTQE, DLPG, TKAD, and TSS. S58 and T80 together coordinate Mg(2+).

The protein belongs to the TRAFAC class TrmE-Era-EngA-EngB-Septin-like GTPase superfamily. EngB GTPase family. The cofactor is Mg(2+).

Necessary for normal cell division and for the maintenance of normal septation. This is Probable GTP-binding protein EngB from Ruegeria sp. (strain TM1040) (Silicibacter sp.).